The primary structure comprises 202 residues: FMN reductase (NADH) RutF (202 aa).

Over residues 168–191 (PRAPRGGSAPAEPARGARAIGARP) the composition is skewed to low complexity. The tract at residues 168 to 202 (PRAPRGGSAPAEPARGARAIGARPPEGPVLALRSA) is disordered.

The protein belongs to the non-flavoprotein flavin reductase family. RutF subfamily.

The enzyme catalyses FMNH2 + NAD(+) = FMN + NADH + 2 H(+). Catalyzes the reduction of FMN to FMNH2 which is used to reduce pyrimidine by RutA via the Rut pathway. The sequence is that of FMN reductase (NADH) RutF from Methylorubrum populi (strain ATCC BAA-705 / NCIMB 13946 / BJ001) (Methylobacterium populi).